Consider the following 314-residue polypeptide: tRNA-cytidine(32) 2-sulfurtransferase (314 aa).

A PP-loop motif motif is present at residues 57–62 (SGGKDS). Cys-132, Cys-135, and Cys-223 together coordinate [4Fe-4S] cluster.

Belongs to the TtcA family. Homodimer. The cofactor is Mg(2+). [4Fe-4S] cluster serves as cofactor.

It localises to the cytoplasm. The enzyme catalyses cytidine(32) in tRNA + S-sulfanyl-L-cysteinyl-[cysteine desulfurase] + AH2 + ATP = 2-thiocytidine(32) in tRNA + L-cysteinyl-[cysteine desulfurase] + A + AMP + diphosphate + H(+). It participates in tRNA modification. In terms of biological role, catalyzes the ATP-dependent 2-thiolation of cytidine in position 32 of tRNA, to form 2-thiocytidine (s(2)C32). The sulfur atoms are provided by the cysteine/cysteine desulfurase (IscS) system. This Alkalilimnicola ehrlichii (strain ATCC BAA-1101 / DSM 17681 / MLHE-1) protein is tRNA-cytidine(32) 2-sulfurtransferase.